The sequence spans 431 residues: Glutamate--tRNA ligase 1 (431 aa).

A 'HIGH' region motif is present at residues 6–16; sequence PSPTGDMHIGN. The 'KMSKS' region motif lies at 235 to 239; sequence KMSKR. Lysine 238 lines the ATP pocket.

It belongs to the class-I aminoacyl-tRNA synthetase family. Glutamate--tRNA ligase type 1 subfamily. In terms of assembly, monomer.

The protein resides in the cytoplasm. The catalysed reaction is tRNA(Glu) + L-glutamate + ATP = L-glutamyl-tRNA(Glu) + AMP + diphosphate. Functionally, catalyzes the attachment of glutamate to tRNA(Glu) in a two-step reaction: glutamate is first activated by ATP to form Glu-AMP and then transferred to the acceptor end of tRNA(Glu). This chain is Glutamate--tRNA ligase 1, found in Campylobacter jejuni subsp. jejuni serotype O:23/36 (strain 81-176).